Consider the following 68-residue polypeptide: Protein P33 (68 aa).

Residues 34 to 63 (IVNLQGRIAELEARETEMLARVDTLIARLA) are a coiled coil.

Assembly protein. The polypeptide is Protein P33 (XXXIII) (Acinetobacter calcoaceticus (Arthrobacter siderocapsulatus)).